The following is a 294-amino-acid chain: Phosphate import ATP-binding protein PstB (294 aa).

Polar residues predominate over residues 1-18 (MSETMTNQNVVNEEQPFN). The segment at 1-24 (MSETMTNQNVVNEEQPFNESKHRS) is disordered. In terms of domain architecture, ABC transporter spans 48 to 289 (LEVNKLKLFY…PSCKQTEDYI (242 aa)). 80–87 (GPSGCGKS) serves as a coordination point for ATP.

Belongs to the ABC transporter superfamily. Phosphate importer (TC 3.A.1.7) family. As to quaternary structure, the complex is composed of two ATP-binding proteins (PstB), two transmembrane proteins (PstC and PstA) and a solute-binding protein (PstS).

The protein resides in the cell inner membrane. It carries out the reaction phosphate(out) + ATP + H2O = ADP + 2 phosphate(in) + H(+). Its function is as follows. Part of the ABC transporter complex PstSACB involved in phosphate import. Responsible for energy coupling to the transport system. This Hahella chejuensis (strain KCTC 2396) protein is Phosphate import ATP-binding protein PstB.